The chain runs to 417 residues: Serine hydroxymethyltransferase (417 aa).

Residues Leu112 and 116 to 118 (GHL) contribute to the (6S)-5,6,7,8-tetrahydrofolate site. N6-(pyridoxal phosphate)lysine is present on Lys221. Glu247 lines the (6S)-5,6,7,8-tetrahydrofolate pocket.

It belongs to the SHMT family. In terms of assembly, homodimer. Requires pyridoxal 5'-phosphate as cofactor.

The protein resides in the cytoplasm. It carries out the reaction (6R)-5,10-methylene-5,6,7,8-tetrahydrofolate + glycine + H2O = (6S)-5,6,7,8-tetrahydrofolate + L-serine. It participates in one-carbon metabolism; tetrahydrofolate interconversion. It functions in the pathway amino-acid biosynthesis; glycine biosynthesis; glycine from L-serine: step 1/1. Catalyzes the reversible interconversion of serine and glycine with tetrahydrofolate (THF) serving as the one-carbon carrier. This reaction serves as the major source of one-carbon groups required for the biosynthesis of purines, thymidylate, methionine, and other important biomolecules. Also exhibits THF-independent aldolase activity toward beta-hydroxyamino acids, producing glycine and aldehydes, via a retro-aldol mechanism. The polypeptide is Serine hydroxymethyltransferase (Borrelia hermsii (strain HS1 / DAH)).